The following is a 267-amino-acid chain: Sulfur carrier protein FdhD (267 aa).

Cysteine 108 serves as the catalytic Cysteine persulfide intermediate.

It belongs to the FdhD family.

It localises to the cytoplasm. Functionally, required for formate dehydrogenase (FDH) activity. Acts as a sulfur carrier protein that transfers sulfur from IscS to the molybdenum cofactor prior to its insertion into FDH. The sequence is that of Sulfur carrier protein FdhD from Shouchella clausii (strain KSM-K16) (Alkalihalobacillus clausii).